The primary structure comprises 554 residues: Hydroxylamine reductase (554 aa).

4 residues coordinate [2Fe-2S] cluster: C3, C6, C18, and C25. Positions 252, 276, 320, 408, 436, 461, 495, and 497 each coordinate hybrid [4Fe-2O-2S] cluster. C408 is subject to Cysteine persulfide.

It belongs to the HCP family. [2Fe-2S] cluster serves as cofactor. Requires hybrid [4Fe-2O-2S] cluster as cofactor.

The protein resides in the cytoplasm. It carries out the reaction A + NH4(+) + H2O = hydroxylamine + AH2 + H(+). Its function is as follows. Catalyzes the reduction of hydroxylamine to form NH(3) and H(2)O. This is Hydroxylamine reductase from Shewanella baltica (strain OS155 / ATCC BAA-1091).